A 520-amino-acid polypeptide reads, in one-letter code: Polyprenol-phosphate-mannose--protein mannosyltransferase (520 aa).

Transmembrane regions (helical) follow at residues 38–58, 119–139, 145–165, 168–188, 237–257, 274–294, 388–408, 418–438, 441–461, and 485–505; these read WAIIAVFALVTRFTGLSSATA, LGWRIMVAIFGTLTIFAIMAI, GSTMVTFIAGILALADGVLLV, RFGMLDIFLVFFITAAAWALI, WSGLYYIAFFGLTSVFLDLWL, DVIPALGSLVIIPALLYIWSW, IYLFGTPAIWWLTVPVILWAL, GYVVPLVAFAAGFLPWLAAYD, MYFFYATALVPFTIIMLALAC, and YISLVVMMFLAFSPLFYGFVI.

Belongs to the glycosyltransferase 39 family.

The protein localises to the cell membrane. The protein operates within protein modification; protein glycosylation. Protein O-mannosyltransferase that catalyzes the transfer of a single mannose residue from a polyprenol phospho-mannosyl lipidic donor to the hydroxyl group of selected serine and threonine residues in acceptor proteins. In Corynebacterium glutamicum (strain ATCC 13032 / DSM 20300 / JCM 1318 / BCRC 11384 / CCUG 27702 / LMG 3730 / NBRC 12168 / NCIMB 10025 / NRRL B-2784 / 534), this protein is Polyprenol-phosphate-mannose--protein mannosyltransferase (pmt).